We begin with the raw amino-acid sequence, 357 residues long: Peptide chain release factor 1 (357 aa).

Gln-234 carries the post-translational modification N5-methylglutamine. The disordered stretch occupies residues 283–313 (SKKQEQRSSNRKQQVGSGDRSERIRTYNFPQ).

Belongs to the prokaryotic/mitochondrial release factor family. Methylated by PrmC. Methylation increases the termination efficiency of RF1.

The protein resides in the cytoplasm. Functionally, peptide chain release factor 1 directs the termination of translation in response to the peptide chain termination codons UAG and UAA. This chain is Peptide chain release factor 1, found in Borrelia garinii subsp. bavariensis (strain ATCC BAA-2496 / DSM 23469 / PBi) (Borreliella bavariensis).